We begin with the raw amino-acid sequence, 538 residues long: Putative outer membrane porin BglH (538 aa).

Positions 1 to 25 (MFRRNLITSAILLMAPLAFSAQSLA) are cleaved as a signal peptide. A disordered region spans residues 52–82 (KDEEKKKYTPATVNRSVSTNDQGYAANPFPT). Polar residues predominate over residues 62-73 (ATVNRSVSTNDQ).

The protein belongs to the porin LamB (TC 1.B.3) family.

Its subcellular location is the cell outer membrane. May be a sugar porin with a broad carbohydrate specificity. This chain is Putative outer membrane porin BglH (bglH), found in Escherichia coli O139:H28 (strain E24377A / ETEC).